The primary structure comprises 56 residues: Ribosome biogenesis protein Nop10 (56 aa).

It belongs to the NOP10 family.

In terms of biological role, involved in ribosome biogenesis; more specifically in 18S rRNA pseudouridylation and in cleavage of pre-rRNA. The protein is Ribosome biogenesis protein Nop10 of Saccharolobus islandicus (strain Y.N.15.51 / Yellowstone #2) (Sulfolobus islandicus).